The sequence spans 261 residues: tRNA pseudouridine synthase A (261 aa).

Asp51 functions as the Nucleophile in the catalytic mechanism. Tyr109 is a substrate binding site.

Belongs to the tRNA pseudouridine synthase TruA family. In terms of assembly, homodimer.

The enzyme catalyses uridine(38/39/40) in tRNA = pseudouridine(38/39/40) in tRNA. Formation of pseudouridine at positions 38, 39 and 40 in the anticodon stem and loop of transfer RNAs. In Shewanella woodyi (strain ATCC 51908 / MS32), this protein is tRNA pseudouridine synthase A.